The sequence spans 810 residues: Volume-regulated anion channel subunit LRRC8A (810 aa).

At M1 the chain carries N-acetylmethionine. Topologically, residues 1–23 (MIPVTELRYFADTQPAYRILKPW) are cytoplasmic. Residues 24 to 47 (WDVFTDYISIVMLMIAVFGGTLQV) form a helical membrane-spanning segment. Topologically, residues 48-123 (TQDKMICLPC…YENRLHWFAK (76 aa)) are extracellular. Intrachain disulfides connect C54/C310, C57/C65, and C113/C295. 2 N-linked (GlcNAc...) asparagine glycosylation sites follow: N66 and N83. A helical transmembrane segment spans residues 124-142 (YFPYLVLLHTLIFLACSNF). Residues 143–264 (WFKFPRTSSK…EEGDIVYRLY (122 aa)) lie on the Cytoplasmic side of the membrane. Position 200 is a phosphothreonine (T200). S202 carries the post-translational modification Phosphoserine. T215 carries the post-translational modification Phosphothreonine. S217 carries the post-translational modification Phosphoserine. A helical transmembrane segment spans residues 265 to 286 (MRQTIIKVIKFILIICYTVYYV). Residues 287-316 (HNIKFDVDCTVDIESLTGYRTYRCAHPLAT) lie on the Extracellular side of the membrane. Residues 317–341 (LFKILASFYISLVIFYGLICMYTLW) form a helical membrane-spanning segment. Over 342 to 810 (WMLRRSLKKY…RLWRADKEQA (469 aa)) the chain is Cytoplasmic. 17 LRR repeats span residues 399 to 422 (ENKL…RLTK), 423 to 445 (NAQD…VFDL), 447 to 468 (ELEV…IAQL), 469 to 492 (TGLK…AFLR), 493 to 515 (ENLR…IYSL), 518 to 542 (LEEL…GLRE), 543 to 565 (LKRL…VTDV), 567 to 589 (VHLQ…SLKK), 590 to 613 (MANL…IFSL), 615 to 637 (NLQE…SFQH), 639 to 661 (HRLT…IGNL), 662 to 684 (TNLE…LFYC), 686 to 707 (KLRY…IGLL), 708 to 730 (QNLQ…LFQC), 732 to 753 (KLRA…VGEL), 754 to 776 (TNLT…LGEC), and 778 to 801 (LLKR…VKER). The short motif at 706–707 (LL) is the Di-leucine motif element.

It belongs to the LRRC8 family. Heterohexamer; oligomerizes with other LRRC8 proteins (LRRC8B, LRRC8C, LRRC8D and/or LRRC8E) to form a heterohexamer. Can form homohexamers in vitro, but these have lower conductance than heterohexamers. In vivo, the subunit composition may depend primarily on expression levels, and heterooligomeric channels containing various proportions of the different LRRC8 proteins may coexist. Interact with GRB2. Interacts with NOX4; this interaction prevents the ubiquitin-mediated degradation of LRRC8A. Post-translationally, N-glycosylated. As to expression, expressed in brain, kidney, ovary, lung, liver, heart, and fetal brain and liver. Found at high levels in bone marrow; lower levels are detected in peripheral blood cells. Expressed on T-cells as well as on B-lineage cells.

It localises to the cell membrane. It is found in the lysosome membrane. The enzyme catalyses chloride(in) = chloride(out). The catalysed reaction is iodide(out) = iodide(in). It carries out the reaction taurine(out) = taurine(in). It catalyses the reaction L-aspartate(out) = L-aspartate(in). The enzyme catalyses L-glutamate(out) = L-glutamate(in). The catalysed reaction is myo-inositol(out) = myo-inositol(in). It carries out the reaction 2',3'-cGAMP(out) = 2',3'-cGAMP(in). Inhibited by (4-[(2-butyl-6,7-dichloro-2-cyclopentyl-2,3-dihydro-1-oxo-1H-inden-5-yl)oxy]butanoic acid), which plugs the channel like a cork in a bottle by binding in the extracellular selectivity filter and sterically occluding ion conduction. Lipids may block conduction in closed heterohexameric channels. Its function is as follows. Essential component of the volume-regulated anion channel (VRAC, also named VSOAC channel), an anion channel required to maintain a constant cell volume in response to extracellular or intracellular osmotic changes. The VRAC channel conducts iodide better than chloride and can also conduct organic osmolytes like taurine. Mediates efflux of amino acids, such as aspartate and glutamate, in response to osmotic stress. LRRC8A and LRRC8D are required for the uptake of the drug cisplatin. In complex with LRRC8C or LRRC8E, acts as a transporter of immunoreactive cyclic dinucleotide GMP-AMP (2'-3'-cGAMP), an immune messenger produced in response to DNA virus in the cytosol: mediates both import and export of 2'-3'-cGAMP, thereby promoting transfer of 2'-3'-cGAMP to bystander cells. In contrast, complexes containing LRRC8D inhibit transport of 2'-3'-cGAMP. Required for in vivo channel activity, together with at least one other family member (LRRC8B, LRRC8C, LRRC8D or LRRC8E); channel characteristics depend on the precise subunit composition. Can form functional channels by itself (in vitro). Involved in B-cell development: required for the pro-B cell to pre-B cell transition. Also required for T-cell development. Required for myoblast differentiation: VRAC activity promotes membrane hyperpolarization and regulates insulin-stimulated glucose metabolism and oxygen consumption. Also acts as a regulator of glucose-sensing in pancreatic beta cells: VRAC currents, generated in response to hypotonicity- or glucose-induced beta cell swelling, depolarize cells, thereby causing electrical excitation, leading to increase glucose sensitivity and insulin secretion. Also plays a role in lysosome homeostasis by forming functional lysosomal VRAC channels in response to low cytoplasmic ionic strength condition: lysosomal VRAC channels are necessary for the formation of large lysosome-derived vacuoles, which store and then expel excess water to maintain cytosolic water homeostasis. Acts as a key factor in NLRP3 inflammasome activation by modulating itaconate efflux and mitochondria function. In Homo sapiens (Human), this protein is Volume-regulated anion channel subunit LRRC8A.